The primary structure comprises 241 residues: Large ribosomal subunit protein uL3 (241 aa).

Disordered stretches follow at residues 140–168 (SHRS…HMGD) and 216–241 (APKP…EEGA). At glutamine 151 the chain carries N5-methylglutamine.

The protein belongs to the universal ribosomal protein uL3 family. As to quaternary structure, part of the 50S ribosomal subunit. Forms a cluster with proteins L14 and L19. Post-translationally, methylated by PrmB.

One of the primary rRNA binding proteins, it binds directly near the 3'-end of the 23S rRNA, where it nucleates assembly of the 50S subunit. The polypeptide is Large ribosomal subunit protein uL3 (Xanthobacter autotrophicus (strain ATCC BAA-1158 / Py2)).